Here is a 171-residue protein sequence, read N- to C-terminus: 3-hydroxydecanoyl-[acyl-carrier-protein] dehydratase (171 aa).

H70 is a catalytic residue.

The protein belongs to the thioester dehydratase family. FabA subfamily. In terms of assembly, homodimer.

Its subcellular location is the cytoplasm. The enzyme catalyses a (3R)-hydroxyacyl-[ACP] = a (2E)-enoyl-[ACP] + H2O. It carries out the reaction (3R)-hydroxydecanoyl-[ACP] = (2E)-decenoyl-[ACP] + H2O. It catalyses the reaction (2E)-decenoyl-[ACP] = (3Z)-decenoyl-[ACP]. Its pathway is lipid metabolism; fatty acid biosynthesis. Functionally, necessary for the introduction of cis unsaturation into fatty acids. Catalyzes the dehydration of (3R)-3-hydroxydecanoyl-ACP to E-(2)-decenoyl-ACP and then its isomerization to Z-(3)-decenoyl-ACP. Can catalyze the dehydratase reaction for beta-hydroxyacyl-ACPs with saturated chain lengths up to 16:0, being most active on intermediate chain length. In Photobacterium profundum (strain SS9), this protein is 3-hydroxydecanoyl-[acyl-carrier-protein] dehydratase.